A 387-amino-acid chain; its full sequence is MENSAPLVAIVAGEASGDQHAAHLIREVKKIAPGVRFGGIAGPQMRAAGVEPLFDSSRLAVVGLVEVLSHLNEIYGAMQKMRHFLEEKHPDLLILVDYPEFNLRLAKRAKTLGIKVLYYISPQVWAWRQYRVHQIGQVVDMMAVVLPFEVPFYEQAGVPVNFVGHPLQHEVKSKFNRNEAVVEFGFNPCCKTLGLLPGSRHSEIKRLLPVLLEAAERIYSEEPEIQYLLPLAATLKEIDLAPYLKGYRLPLRVIPDRSYDVMAACDAMVAASGTVTLEAALMGVPLVVIYKMNSLSYWMGRLLIKVDHIALCNIIAGEGVAPELIQQDASPERIALEALNLLRDKERRQTMQQKFYAIKHKLGAGAQRTIAELTVAMLEGENLGRAS.

This sequence belongs to the LpxB family.

It carries out the reaction a lipid X + a UDP-2-N,3-O-bis[(3R)-3-hydroxyacyl]-alpha-D-glucosamine = a lipid A disaccharide + UDP + H(+). Its pathway is bacterial outer membrane biogenesis; LPS lipid A biosynthesis. Functionally, condensation of UDP-2,3-diacylglucosamine and 2,3-diacylglucosamine-1-phosphate to form lipid A disaccharide, a precursor of lipid A, a phosphorylated glycolipid that anchors the lipopolysaccharide to the outer membrane of the cell. This is Lipid-A-disaccharide synthase from Nitrosococcus oceani (strain ATCC 19707 / BCRC 17464 / JCM 30415 / NCIMB 11848 / C-107).